We begin with the raw amino-acid sequence, 281 residues long: L-cysteine S-thiosulfotransferase subunit SoxA (281 aa).

The first 25 residues, 1 to 25, serve as a signal peptide directing secretion; sequence MTKHGFLLATLVLAGATLPIGPVTA. A disulfide bond links cysteine 99 and cysteine 130. One can recognise a Cytochrome c domain in the interval 175 to 281; it reads AAYEQGKRFY…LELNGPGARK (107 aa). The heme site is built by cysteine 195 and histidine 199. Arginine 238 contacts substrate. Position 242 (cysteine 242) interacts with heme. Cysteine 242 functions as the Cysteine persulfide intermediate in the catalytic mechanism.

The protein belongs to the SoxA family. As to quaternary structure, heterodimer of SoxA and SoxX. The cofactor is heme. In terms of processing, cysteine persulfide at Cys-242.

It is found in the periplasm. The catalysed reaction is L-cysteinyl-[SoxY protein] + thiosulfate + 2 Fe(III)-[cytochrome c] = S-sulfosulfanyl-L-cysteinyl-[SoxY protein] + 2 Fe(II)-[cytochrome c] + 2 H(+). The enzyme catalyses S-sulfanyl-L-cysteinyl-[SoxY protein] + thiosulfate + 2 Fe(III)-[cytochrome c] = S-(2-sulfodisulfanyl)-L-cysteinyl-[SoxY protein] + 2 Fe(II)-[cytochrome c] + 2 H(+). Functionally, C-type monoheme cytochrome, which is part of the SoxAX cytochrome complex involved in sulfur oxidation. The SoxAX complex catalyzes the formation of a heterodisulfide bond between the conserved cysteine residue on a sulfur carrier SoxYZ complex subunit SoxY and thiosulfate or other inorganic sulfur substrates. This leads to the intermediary formation of conspicuous sulfur globules inside of the cells. The sequence is that of L-cysteine S-thiosulfotransferase subunit SoxA from Allochromatium vinosum (Chromatium vinosum).